A 559-amino-acid chain; its full sequence is DNA ligase (559 aa).

Glu247 is an ATP binding site. Lys249 acts as the N6-AMP-lysine intermediate in catalysis. ATP is bound by residues Arg254, Arg269, Glu299, Phe339, Arg414, and Lys420.

Belongs to the ATP-dependent DNA ligase family. The cofactor is Mg(2+).

It carries out the reaction ATP + (deoxyribonucleotide)n-3'-hydroxyl + 5'-phospho-(deoxyribonucleotide)m = (deoxyribonucleotide)n+m + AMP + diphosphate.. In terms of biological role, DNA ligase that seals nicks in double-stranded DNA during DNA replication, DNA recombination and DNA repair. This is DNA ligase from Pyrococcus abyssi.